The following is a 242-amino-acid chain: UPF0246 protein SSA_1395 (242 aa).

The protein belongs to the UPF0246 family.

The chain is UPF0246 protein SSA_1395 from Streptococcus sanguinis (strain SK36).